The sequence spans 221 residues: MRESRKLDSAALYLCTDARRERGDLAEFADAALAGGVDIIQLRDKGSAGEQRFGPLEAREEIEVLATLADAARRHGALFAVNDRADIALAADADVLHLGQDDLPLTVARRIVGDRIVGRSTHDLDQVRAAVGEDVNYFCVGPCWPTPTKPGRPAPGLDLIRATAALGTDKPWFAIGGIDAERLPEVLDAGARRVVVVRAITAADDPGAAAQRLAGMLSAAG.

Residues 41–45 (QLRDK) and Asn-82 each bind 4-amino-2-methyl-5-(diphosphooxymethyl)pyrimidine. Positions 83 and 102 each coordinate Mg(2+). Ser-120 lines the 4-amino-2-methyl-5-(diphosphooxymethyl)pyrimidine pocket. Residue 146–148 (TPT) coordinates 2-[(2R,5Z)-2-carboxy-4-methylthiazol-5(2H)-ylidene]ethyl phosphate. Position 149 (Lys-149) interacts with 4-amino-2-methyl-5-(diphosphooxymethyl)pyrimidine. Gly-177 lines the 2-[(2R,5Z)-2-carboxy-4-methylthiazol-5(2H)-ylidene]ethyl phosphate pocket.

The protein belongs to the thiamine-phosphate synthase family. Requires Mg(2+) as cofactor.

The enzyme catalyses 2-[(2R,5Z)-2-carboxy-4-methylthiazol-5(2H)-ylidene]ethyl phosphate + 4-amino-2-methyl-5-(diphosphooxymethyl)pyrimidine + 2 H(+) = thiamine phosphate + CO2 + diphosphate. It carries out the reaction 2-(2-carboxy-4-methylthiazol-5-yl)ethyl phosphate + 4-amino-2-methyl-5-(diphosphooxymethyl)pyrimidine + 2 H(+) = thiamine phosphate + CO2 + diphosphate. The catalysed reaction is 4-methyl-5-(2-phosphooxyethyl)-thiazole + 4-amino-2-methyl-5-(diphosphooxymethyl)pyrimidine + H(+) = thiamine phosphate + diphosphate. Its pathway is cofactor biosynthesis; thiamine diphosphate biosynthesis; thiamine phosphate from 4-amino-2-methyl-5-diphosphomethylpyrimidine and 4-methyl-5-(2-phosphoethyl)-thiazole: step 1/1. Its function is as follows. Condenses 4-methyl-5-(beta-hydroxyethyl)thiazole monophosphate (THZ-P) and 2-methyl-4-amino-5-hydroxymethyl pyrimidine pyrophosphate (HMP-PP) to form thiamine monophosphate (TMP). This is Thiamine-phosphate synthase from Mycolicibacterium vanbaalenii (strain DSM 7251 / JCM 13017 / BCRC 16820 / KCTC 9966 / NRRL B-24157 / PYR-1) (Mycobacterium vanbaalenii).